We begin with the raw amino-acid sequence, 241 residues long: B-cell receptor-associated protein 29 (241 aa).

Residues 1-6 (MTLQWA) are Lumenal-facing. Residues 7 to 27 (AVATFLYAEIGLILIFCLPFI) form a helical membrane-spanning segment. At 28–43 (PPQRWQKIFSFNVWGK) the chain is on the cytoplasmic side. Residues 44–64 (IATFWNKAFLTIIILLIVLFL) traverse the membrane as a helical segment. Topologically, residues 65–103 (DAVREVRKYSSVHTIEKSSTSRPDAYEHTQMKLFRSQRN) are lumenal. The helical transmembrane segment at 104-124 (LYISGFSLFFWLVLRRLVTLI) threads the bilayer. Residues 125–241 (TQLAKELSNK…RLERGNKKRL (117 aa)) are Cytoplasmic-facing. The stretch at 166 to 233 (GKDEECVLEA…KEHSELQDRL (68 aa)) forms a coiled coil. A disordered region spans residues 193–223 (KTSDALSKAQNDVMEMKMQSERLSKEYDQLL). The segment covering 206–223 (MEMKMQSERLSKEYDQLL) has biased composition (basic and acidic residues). A Di-lysine motif motif is present at residues 238 to 241 (KKRL).

Belongs to the BCAP29/BCAP31 family. As to quaternary structure, homodimer and heterodimer with BCAP31. Binds CASP8 as a complex containing BCAP31, BCAP29, BCL2 and/or BCL2L1. Interacts with VAMP3, VAMP1 and membrane IgD immunoglobulins. May interact with ACTG1 and non-muscle myosin II.

It localises to the endoplasmic reticulum membrane. Functionally, may play a role in anterograde transport of membrane proteins from the endoplasmic reticulum to the Golgi. May be involved in CASP8-mediated apoptosis. This is B-cell receptor-associated protein 29 (BCAP29) from Pongo abelii (Sumatran orangutan).